Reading from the N-terminus, the 351-residue chain is Photosystem II D2 protein (351 aa).

A helical membrane pass occupies residues 39-59 (TSYLSIGGWFTGTTFVTSWYT). His116 serves as a coordination point for chlorophyll a. Residues 123-139 (GFCLRQFEIARLVGIRP) form a helical membrane-spanning segment. The pheophytin a site is built by Gln128 and Asn141. A helical transmembrane segment spans residues 151–164 (IFVSVFLMYPLGQA). His196 lines the chlorophyll a pocket. Residues 206 to 226 (AALLCAIHGATVQNTIFEDGD) traverse the membrane as a helical segment. The a plastoquinone site is built by His213 and Phe260. Position 213 (His213) interacts with Fe cation. His267 contributes to the Fe cation binding site. The helical transmembrane segment at 277–293 (GLWTSAIGIVGLALNLR) threads the bilayer.

Belongs to the reaction center PufL/M/PsbA/D family. As to quaternary structure, PSII is composed of 1 copy each of membrane proteins PsbA, PsbB, PsbC, PsbD, PsbE, PsbF, PsbH, PsbI, PsbJ, PsbK, PsbL, PsbM, PsbT, PsbX, PsbY, PsbZ, Psb30/Ycf12, at least 3 peripheral proteins of the oxygen-evolving complex and a large number of cofactors. It forms dimeric complexes. It depends on The D1/D2 heterodimer binds P680, chlorophylls that are the primary electron donor of PSII, and subsequent electron acceptors. It shares a non-heme iron and each subunit binds pheophytin, quinone, additional chlorophylls, carotenoids and lipids. There is also a Cl(-1) ion associated with D1 and D2, which is required for oxygen evolution. The PSII complex binds additional chlorophylls, carotenoids and specific lipids. as a cofactor.

The protein resides in the plastid. It is found in the chloroplast thylakoid membrane. It carries out the reaction 2 a plastoquinone + 4 hnu + 2 H2O = 2 a plastoquinol + O2. Functionally, photosystem II (PSII) is a light-driven water:plastoquinone oxidoreductase that uses light energy to abstract electrons from H(2)O, generating O(2) and a proton gradient subsequently used for ATP formation. It consists of a core antenna complex that captures photons, and an electron transfer chain that converts photonic excitation into a charge separation. The D1/D2 (PsbA/PsbD) reaction center heterodimer binds P680, the primary electron donor of PSII as well as several subsequent electron acceptors. D2 is needed for assembly of a stable PSII complex. In Guillardia theta (Cryptophyte), this protein is Photosystem II D2 protein.